Reading from the N-terminus, the 91-residue chain is Metalloproteinase inhibitor 2 (91 aa).

The 91-residue stretch at 1-91 (KAVSEKEVDS…FIVPWDTLST (91 aa)) folds into the NTR domain.

It belongs to the protease inhibitor I35 (TIMP) family. In terms of processing, the activity of TIMP2 is dependent on the presence of disulfide bonds.

It localises to the secreted. Its function is as follows. Complexes with metalloproteinases (such as collagenases) and irreversibly inactivates them. The protein is Metalloproteinase inhibitor 2 (TIMP2) of Equus caballus (Horse).